Here is a 573-residue protein sequence, read N- to C-terminus: PCNA-interacting partner (573 aa).

Disordered stretches follow at residues 470–505 (VGKA…SKGK) and 531–560 (PKVP…RGKL).

It belongs to the PARI family. As to quaternary structure, interacts with RAD51 and PCNA. Interacts with PARP1. Interacts with TASOR. Expressed in the ovary, Sertoli cells of the testis and in granular cells within the cerebellum.

It localises to the cytoplasm. The protein localises to the nucleus. Required to suppress inappropriate homologous recombination, thereby playing a central role DNA repair and in the maintenance of genomic stability. Antagonizes homologous recombination by interfering with the formation of the RAD51-DNA homologous recombination structure. Binds single-strand DNA and poly(A) homopolymers. Positively regulate the poly(ADP-ribosyl)ation activity of PARP1; however such function may be indirect. The sequence is that of PCNA-interacting partner (Parpbp) from Mus musculus (Mouse).